The sequence spans 492 residues: GMP reductase (492 aa).

Residues 30–31 (SR) and Arg78 each bind NADP(+). CBS domains lie at 99–162 (LIED…LVET) and 164–223 (MTPV…LNAT). Residues 260–262 (DIA) and 313–314 (VG) each bind NADP(+). K(+)-binding residues include Gly314, Gly316, and Cys319. Cys319 functions as the Thioimidate intermediate in the catalytic mechanism. Thr321 functions as the Proton donor/acceptor in the catalytic mechanism. Residue Arg322 coordinates K(+). GMP is bound by residues 352–354 (DGG), 375–376 (GN), and 401–403 (GMA). NADP(+) is bound by residues Met402 and 454–457 (SGIS). The short motif at 490–492 (SKL) is the Microbody targeting signal element.

The protein belongs to the IMPDH/GMPR family. GuaC type 1 subfamily. As to quaternary structure, homotetramer.

The protein resides in the glycosome. The catalysed reaction is IMP + NH4(+) + NADP(+) = GMP + NADPH + 2 H(+). Its activity is regulated as follows. Activated by GTP and inhibited by ATP and IMP. Mycophenolic acid (MPA) is a competitive inhibitor of the enzyme with respect to NADPH. Its function is as follows. Catalyzes the irreversible NADPH-dependent deamination of GMP to IMP. It functions in the conversion of nucleobase, nucleoside and nucleotide derivatives of G to A nucleotides, and in maintaining the intracellular balance of A and G nucleotides. The chain is GMP reductase from Leishmania major.